Consider the following 279-residue polypeptide: H-2 class II histocompatibility antigen gamma chain (279 aa).

A disordered region spans residues Met1–Glu23. Topologically, residues Met1–Arg29 are cytoplasmic. Ser9 carries the phosphoserine modification. The helical; Signal-anchor for type II membrane protein transmembrane segment at Gly30–Tyr55 threads the bilayer. The Extracellular portion of the chain corresponds to Gln56–Leu279. Asn113 and Asn119 each carry an N-linked (GlcNAc...) asparagine glycan. A Thyroglobulin type-1 domain is found at Leu193 to Cys254. Cystine bridges form between Cys196–Cys215, Cys226–Cys233, and Cys235–Cys254. An O-linked (Xyl...) (chondroitin sulfate) serine glycan is attached at Ser265.

As to quaternary structure, nonamer composed of three alpha/beta/gamma heterotrimers. Interacts with CD44; this complex is essential for the MIF-induced signaling cascade that results in B cell survival. Interacts with the mature form of CTSL; the complex survive in neutral pH environment. Expressed in thymus and lymph noodes. Expressed by antigen-presenting cells (APCs). As to expression, expressed in thymus and lymph noodes.

Its subcellular location is the late endosome. It is found in the lysosome. It localises to the cell membrane. The protein localises to the endoplasmic reticulum membrane. The protein resides in the golgi apparatus. Its subcellular location is the trans-Golgi network. It is found in the endosome. It localises to the secreted. Plays a critical role in MHC class II antigen processing by stabilizing peptide-free class II alpha/beta heterodimers in a complex soon after their synthesis and directing transport of the complex from the endoplasmic reticulum to compartments where peptide loading of class II takes place. Enhance also the stimulation of T-cell responses through interaction with CD44. Functionally, stabilizes the conformation of mature CTSL by binding to its active site and serving as a chaperone to help maintain a pool of mature enzyme in endocytic compartments and extracellular space of antigen-presenting cells (APCs). Its function is as follows. Binds to the peptide-binding site of MHC class II alpha/beta heterodimers forming an alpha-beta-CLIP complex, thereby preventing the loading of antigenic peptides to the MHC class II complex until its release by HLA-DM in the endosome. The sequence is that of H-2 class II histocompatibility antigen gamma chain from Mus musculus (Mouse).